A 300-amino-acid chain; its full sequence is Transcriptional dual regulator GltC (300 aa).

An HTH lysR-type domain is found at 1–58 (MELRQLRYFMEVAEREHVSEAADHLHVAQSAISRQIANLEEELNVTLFEREGRNIKLT). Residues 18–37 (VSEAADHLHVAQSAISRQIA) constitute a DNA-binding region (H-T-H motif).

Belongs to the LysR transcriptional regulatory family. In terms of assembly, interacts with gutamate dehydrogenase RocG.

With respect to regulation, activated by alpha-ketoglutarate and inhibited by glutamate and by RocG. In terms of biological role, positive regulator of glutamate biosynthesis (gltAB genes). Negatively regulates its own expression. The chain is Transcriptional dual regulator GltC (gltC) from Bacillus subtilis (strain 168).